The sequence spans 758 residues: MTKIRVHEYAKQVNKTSKEVIEALSKLNVSVTNHMSMLEKDIVSKLNQTFKATPEKNVGKQATQNISQKSQSNGQQNHSVKKQEGQRQQSATSKPKVNNQQHSNSSNEKSKNTKGNQNRNMTQNNNNNNNNNNNNRRGGGGYNQRPKPGIHGGKRRHPKTHQPSIPVKQKELPEKITFVESLSVAELAKKLHREPSEIIKKLFMLGVMATINQELDKDAIELICADYGVEVEEEIRVDITDLETHFEQTEEVNEAQLSERPPVVTIMGHVDHGKTTLLDSIRNTKVTAGEAGGITQHIGAYQVTEGDKKITFLDTPGHAAFTTMRARGAKVTDLTILVVAADDGVMPQTVEAINHAKAAEVPIIVAVNKMDKPSANPDRVMQELTEHGLVPEAWGGETIFVPISALKGEGIDTLLEMILLVAEVGELKANPDRLALGTVIEAQLDKGRGSVATLLVQDGTLKVGDPIVVGHTFGRVRAMVNDKGRRVKEAGPSTPVEITGLNDVPQAGDRFVVFEDEKTARQVGETRAMSAIQAQRSEKQRVTLDNLFEQMSQGEMKELNLIVKADVQGTVEAMAASLMKIDVEGVNVKIIHTGAGAITESDISLAAASNAIVIGFNVRPDVNAKRAAEEEGVDIRLHRIIYKVIEEIEQAMKGMLDPEFEEKIIGQAEVRQTIKVSKVGTIAGSYVTEGKVTRDSGVRVIRDNVVIFEGELDTLKRFKDEVKEVARGYECGITITNFNDIKEGDIIEAYIMEEVKRV.

A disordered region spans residues 55–168 (EKNVGKQATQ…KTHQPSIPVK (114 aa)). Polar residues-rich tracts occupy residues 60–78 (KQATQNISQKSQSNGQQNH) and 86–95 (QRQQSATSKP). Positions 96 to 136 (KVNNQQHSNSSNEKSKNTKGNQNRNMTQNNNNNNNNNNNNR) are enriched in low complexity. A tr-type G domain is found at 259–428 (ERPPVVTIMG…LLVAEVGELK (170 aa)). The interval 268–275 (GHVDHGKT) is G1. 268 to 275 (GHVDHGKT) contributes to the GTP binding site. The segment at 293–297 (GITQH) is G2. Positions 314–317 (DTPG) are G3. GTP-binding positions include 314–318 (DTPGH) and 368–371 (NKMD). Residues 368-371 (NKMD) form a G4 region. The G5 stretch occupies residues 404–406 (SAL).

It belongs to the TRAFAC class translation factor GTPase superfamily. Classic translation factor GTPase family. IF-2 subfamily.

The protein resides in the cytoplasm. In terms of biological role, one of the essential components for the initiation of protein synthesis. Protects formylmethionyl-tRNA from spontaneous hydrolysis and promotes its binding to the 30S ribosomal subunits. Also involved in the hydrolysis of GTP during the formation of the 70S ribosomal complex. The protein is Translation initiation factor IF-2 of Lysinibacillus sphaericus (strain C3-41).